Consider the following 343-residue polypeptide: Ferrochelatase (343 aa).

Fe cation is bound by residues H191 and E270.

The protein belongs to the ferrochelatase family.

The protein resides in the cytoplasm. The catalysed reaction is heme b + 2 H(+) = protoporphyrin IX + Fe(2+). It participates in porphyrin-containing compound metabolism; protoheme biosynthesis; protoheme from protoporphyrin-IX: step 1/1. In terms of biological role, catalyzes the ferrous insertion into protoporphyrin IX. In Phenylobacterium zucineum (strain HLK1), this protein is Ferrochelatase.